A 282-amino-acid chain; its full sequence is Casein kinase II subunit beta-2 (282 aa).

The interval 1–92 (MYRERGMVGS…ESEVSGSDGE (92 aa)) is disordered. Residues 13–28 (EVVDRKRINEIHDNRP) show a composition bias toward basic and acidic residues. Polar residues-rich tracts occupy residues 29–47 (SHSM…STSV) and 61–71 (RSGSISKTNIS). Acidic residues predominate over residues 75–92 (DISDTDSEESEVSGSDGE).

Belongs to the casein kinase 2 subunit beta family. Heterotetramer of two catalytic alpha subunits and two regulatory beta subunits. Interacts with CCA1. In terms of processing, phosphorylated by alpha subunit.

It is found in the cytoplasm. The protein localises to the cytosol. The protein resides in the nucleus. Plays a complex role in regulating the basal catalytic activity of the alpha subunit. The tetrameric holoenzyme CK2, composed of two alpha and two beta subunits, phosphorylates the transcription factor PIF1 after an exposure to light, resulting in a proteasome-dependent degradation of PIF1 and promotion of photomorphogenesis. CK2 phosphorylates translation initiation factors. May participate in the regulation of the initiation of translation. The polypeptide is Casein kinase II subunit beta-2 (CKB2) (Arabidopsis thaliana (Mouse-ear cress)).